Consider the following 542-residue polypeptide: Endonuclease 4 homolog (542 aa).

Disordered regions lie at residues 89–123 and 141–234; these read NEEI…QTSI and PFFS…ENKF. Low complexity-rich tracts occupy residues 99-115 and 147-170; these read SKKL…QQSK and NNAS…TTTT. Positions 171 to 206 form a coiled coil; that stretch reads TKKRNNKDEENEDDNEEEEEEEEEEEDKKSKKKTTT. Over residues 179–196 the composition is skewed to acidic residues; sequence EENEDDNEEEEEEEEEEE. The segment covering 205–215 has biased composition (low complexity); it reads TTTTTTTTTTA. A compositionally biased stretch (basic residues) spans 216–227; the sequence is YKKKSSPKKKKV. The Nuclear localization signal motif lies at 222 to 227; the sequence is PKKKKV. Zn(2+) is bound by residues His-328, His-368, Glu-404, Asp-438, His-441, His-475, Asp-488, His-490, and Glu-520.

The protein belongs to the AP endonuclease 2 family. Zn(2+) serves as cofactor.

It is found in the nucleus. It catalyses the reaction Endonucleolytic cleavage to 5'-phosphooligonucleotide end-products.. Its function is as follows. Plays a role in DNA repair. It cleaves phosphodiester bonds at apurinic or apyrimidinic sites (AP sites) to produce new 5'-ends that are base-free deoxyribose 5-phosphate residues. This is Endonuclease 4 homolog (apnA) from Dictyostelium discoideum (Social amoeba).